Consider the following 1928-residue polypeptide: Lactase/phlorizin hydrolase (1928 aa).

Positions 1 to 21 are cleaved as a signal peptide; sequence MELPWTALFLSTVLLGLSCQG. Positions 22–867 are cleaved as a propeptide — XBetaGly; that stretch reads SDWESDRNFI…LPVRADFTSR (846 aa). The Extracellular segment spans residues 22–1883; that stretch reads SDWESDRNFI…LMLGIAEAQT (1862 aa). Positions 46-289 are glycosyl hydrolase-1 1; Region I; sequence NYPPGKQGSD…FIYTLKLEDC (244 aa). The interval 364 to 856 is glycosyl hydrolase-1 2; Region II; the sequence is VWAAFANQSR…GFSAKKVKRN (493 aa). Asn370, Asn514, Asn824, Asn936, Asn948, Asn991, and Asn1037 each carry an N-linked (GlcNAc...) asparagine glycan. Residues 904 to 1367 are glycosyl hydrolase-1 3; Region III. Phlorizin hydrolase/Glycosylceramidase activity; it reads RFRDDFLWGV…DLIANNGMPL (464 aa). The active-site Proton donor; for phlorizin hydrolase/Glycosylceramidase activity is Glu1067. Asn1176 and Asn1240 each carry an N-linked (GlcNAc...) asparagine glycan. Glu1274 serves as the catalytic Nucleophile; for phlorizin hydrolase/Glycosylceramidase activity. N-linked (GlcNAc...) asparagine glycans are attached at residues Asn1281 and Asn1509. The interval 1374 to 1847 is glycosyl hydrolase-1 4; Region IV. Lactase activity; sequence LYGEFPKGFI…CNGFPDPAQG (474 aa). The active-site Proton donor; for lactase activity is the Glu1539. N-linked (GlcNAc...) asparagine glycosylation is found at Asn1657 and Asn1684. The Nucleophile; for lactase activity role is filled by Glu1750. N-linked (GlcNAc...) asparagine glycosylation is found at Asn1762 and Asn1815. A helical transmembrane segment spans residues 1884–1902; that stretch reads ALYVLFALLLLGACSLAFL. Topologically, residues 1903-1928 are cytoplasmic; that stretch reads TYNTGRRSKQGNAQPSQHQLSPISSF.

Belongs to the glycosyl hydrolase 1 family. In terms of assembly, homodimer. In terms of processing, N-glycosylated. As to expression, intestine.

The protein resides in the apical cell membrane. It carries out the reaction lactose + H2O = beta-D-galactose + D-glucose. The enzyme catalyses phlorizin + H2O = phloretin + beta-D-glucose. The catalysed reaction is D-cellobiose + H2O = beta-D-glucose + D-glucose. It catalyses the reaction quercetin 4'-O-beta-D-glucoside + H2O = quercetin + beta-D-glucose. It carries out the reaction quercetin 3-O-beta-D-glucoside + H2O = quercetin + beta-D-glucose. The enzyme catalyses kaempferol 3-O-beta-D-glucoside + H2O = kaempferol + beta-D-glucose. The catalysed reaction is luteolin 7-O-beta-D-glucoside + H2O = luteolin + beta-D-glucose. It catalyses the reaction luteolin 4'-O-beta-D-glucoside + H2O = luteolin + beta-D-glucose. It carries out the reaction (2S)-naringenin 7-O-beta-D-glucoside + H2O = (2S)-naringenin + beta-D-glucose. The enzyme catalyses eriodictyol-7-O-beta-D-glucoside + H2O = (S)-eriodictyol + beta-D-glucose. The catalysed reaction is apigenin 7-O-beta-D-glucoside + H2O = apigenin + beta-D-glucose. It catalyses the reaction daidzein 7-O-beta-D-glucoside + H2O = daidzein + beta-D-glucose + H(+). It carries out the reaction genistein 7-O-beta-D-glucoside + H2O = genistein + beta-D-glucose. The enzyme catalyses a beta-D-galactosyl-N-acylsphingosine + H2O = a ceramide + beta-D-galactose.. The catalysed reaction is beta-D-glucosyl-(1&lt;-&gt;1')-N-hexadecanoylsphing-4-enine + H2O = N-hexadecanoylsphing-4-enine + beta-D-glucose. It catalyses the reaction beta-D-galactosyl-(1&lt;-&gt;1')-N-hexadecanoylsphing-4-enine + H2O = beta-D-galactose + N-hexadecanoylsphing-4-enine. It carries out the reaction beta-D-galactosyl-(1&lt;-&gt;1')-N-hexadecanoylsphinganine + H2O = N-hexadecanoylsphinganine + beta-D-galactose. The enzyme catalyses beta-D-glucosyl-(1&lt;-&gt;1')-N-hexadecanoylsphinganine + H2O = N-hexadecanoylsphinganine + beta-D-glucose. In terms of biological role, broad specificity glycosidase of the intestinal brush border membrane that hydrolyzes lactose, the main sugar in mammalian milk, to produce D-glucose and D-galactose. The mature protein is composed of two domains that catalyze the hydrolysis of beta-glucopyranosides and beta-galactopyranosides, with a preference for hydrophilic aglycones (in lactose and cellobiose) for one domain and hydrophobic aglycones (in phlorizin and glycosylceramides) for the other. This Rattus norvegicus (Rat) protein is Lactase/phlorizin hydrolase.